We begin with the raw amino-acid sequence, 472 residues long: Eukaryotic translation initiation factor 2 subunit 3B (472 aa).

Alanine 2 carries the N-acetylalanine modification. Serine 16 bears the Phosphoserine mark. A tr-type G domain is found at 39 to 248 (QATINIGTIG…IVKKIPVPPR (210 aa)). Residues 48-55 (GHVAHGKS) form a G1 region. GTP is bound at residue 51 to 56 (AHGKST). The tract at residues 76-80 (NITIK) is G2. The G3 stretch occupies residues 134 to 137 (DCPG). GTP-binding positions include 190-193 (NKID) and 225-227 (SAQ). The tract at residues 190-193 (NKID) is G4. Residues 225-227 (SAQ) form a G5 region.

The protein belongs to the TRAFAC class translation factor GTPase superfamily. Classic translation factor GTPase family. EIF2G subfamily. As to quaternary structure, eIF2 is a heterotrimer composed of an alpha, a beta and a gamma chain. eIF2 is member of the 43S pre-initiation complex (43S PIC). In terms of tissue distribution, specifically expressed in testis at the mRNA level.

The catalysed reaction is GTP + H2O = GDP + phosphate + H(+). Functionally, member of the eIF2 complex that functions in the early steps of protein synthesis by forming a ternary complex with GTP and initiator tRNA. This complex binds to a 40S ribosomal subunit, followed by mRNA binding to form the 43S pre-initiation complex (43S PIC). Junction of the 60S ribosomal subunit to form the 80S initiation complex is preceded by hydrolysis of the GTP bound to eIF2 and release of an eIF2-GDP binary complex. In order for eIF2 to recycle and catalyze another round of initiation, the GDP bound to eIF2 must exchange with GTP by way of a reaction catalyzed by eIF-2B. The protein is Eukaryotic translation initiation factor 2 subunit 3B of Homo sapiens (Human).